Here is a 228-residue protein sequence, read N- to C-terminus: Prolactin (228 aa).

The first 29 residues, 1-29, serve as a signal peptide directing secretion; that stretch reads MCTKRSSLKGSLLLLLLISSLLLSRSVDS. The cysteines at positions 33 and 40 are disulfide-linked. Phosphoserine occurs at positions 55, 63, and 119. 2 disulfides stabilise this stretch: C87-C203 and C220-C228.

This sequence belongs to the somatotropin/prolactin family. In terms of assembly, interacts with PRLR.

The protein resides in the secreted. Functionally, prolactin acts primarily on the mammary gland by promoting lactation. This Isoodon macrourus (Short-nosed bandicoot) protein is Prolactin (PRL).